A 113-amino-acid polypeptide reads, in one-letter code: Hydrogenase maturation factor HypA (113 aa).

His2 lines the Ni(2+) pocket. Residues Cys73, Cys76, Cys89, and Cys92 each contribute to the Zn(2+) site.

Belongs to the HypA/HybF family.

Involved in the maturation of [NiFe] hydrogenases. Required for nickel insertion into the metal center of the hydrogenase. The protein is Hydrogenase maturation factor HypA of Acidithiobacillus ferrooxidans (strain ATCC 23270 / DSM 14882 / CIP 104768 / NCIMB 8455) (Ferrobacillus ferrooxidans (strain ATCC 23270)).